A 388-amino-acid polypeptide reads, in one-letter code: tRNA-specific adenosine deaminase 1 (388 aa).

The A to I editase domain maps to 63–388 (CLATGVKCTP…PNGGNEFQWI (326 aa)). His89 provides a ligand contact to Zn(2+). The active-site Proton donor is the Glu91. Arg96 contributes to the 1D-myo-inositol hexakisphosphate binding site. Zn(2+) is bound by residues Cys144 and Cys201. 1D-myo-inositol hexakisphosphate is bound by residues Lys204, Lys357, and Arg363.

Belongs to the ADAT1 family. The cofactor is 1D-myo-inositol hexakisphosphate. It depends on Zn(2+) as a cofactor.

The protein localises to the cytoplasm. It is found in the nucleus. It catalyses the reaction adenosine(37) in tRNA(Ala) + H2O + H(+) = inosine(37) in tRNA(Ala) + NH4(+). Its function is as follows. Deaminates adenosine-37 to inosine in tRNA-Ala. The chain is tRNA-specific adenosine deaminase 1 from Schizosaccharomyces pombe (strain 972 / ATCC 24843) (Fission yeast).